A 276-amino-acid chain; its full sequence is Undecaprenyl-diphosphatase (276 aa).

7 helical membrane-spanning segments follow: residues 48 to 68 (AANS…AIVF), 92 to 112 (LSIA…FLFE), 119 to 139 (LFSV…MLFA), 155 to 175 (ISYK…WPGF), 196 to 216 (ADFT…LSLV), 225 to 245 (DLMP…LFVV), and 255 to 275 (IKLV…LLIM).

The protein belongs to the UppP family.

The protein localises to the cell membrane. It carries out the reaction di-trans,octa-cis-undecaprenyl diphosphate + H2O = di-trans,octa-cis-undecaprenyl phosphate + phosphate + H(+). Functionally, catalyzes the dephosphorylation of undecaprenyl diphosphate (UPP). Confers resistance to bacitracin. This Bacillus subtilis (strain 168) protein is Undecaprenyl-diphosphatase.